Here is a 348-residue protein sequence, read N- to C-terminus: Dihydroorotase (348 aa).

Zn(2+) contacts are provided by His-17 and His-19. Substrate contacts are provided by residues 19–21 (HLR) and Asn-45. Zn(2+)-binding residues include Lys-103, His-140, and His-178. The residue at position 103 (Lys-103) is an N6-carboxylysine. Residue His-140 participates in substrate binding. Residue Leu-223 coordinates substrate. Asp-251 is a binding site for Zn(2+). Asp-251 is a catalytic residue. Positions 255 and 267 each coordinate substrate.

It belongs to the metallo-dependent hydrolases superfamily. DHOase family. Class II DHOase subfamily. As to quaternary structure, homodimer. Zn(2+) is required as a cofactor.

It catalyses the reaction (S)-dihydroorotate + H2O = N-carbamoyl-L-aspartate + H(+). It functions in the pathway pyrimidine metabolism; UMP biosynthesis via de novo pathway; (S)-dihydroorotate from bicarbonate: step 3/3. In terms of biological role, catalyzes the reversible cyclization of carbamoyl aspartate to dihydroorotate. The polypeptide is Dihydroorotase (Klebsiella pneumoniae (strain 342)).